A 157-amino-acid polypeptide reads, in one-letter code: SsrA-binding protein (157 aa).

Positions 133–157 (LHDKRESEKKRDWGREKGRLLRARG) are disordered. Basic and acidic residues predominate over residues 135–151 (DKRESEKKRDWGREKGR).

Belongs to the SmpB family.

It localises to the cytoplasm. Its function is as follows. Required for rescue of stalled ribosomes mediated by trans-translation. Binds to transfer-messenger RNA (tmRNA), required for stable association of tmRNA with ribosomes. tmRNA and SmpB together mimic tRNA shape, replacing the anticodon stem-loop with SmpB. tmRNA is encoded by the ssrA gene; the 2 termini fold to resemble tRNA(Ala) and it encodes a 'tag peptide', a short internal open reading frame. During trans-translation Ala-aminoacylated tmRNA acts like a tRNA, entering the A-site of stalled ribosomes, displacing the stalled mRNA. The ribosome then switches to translate the ORF on the tmRNA; the nascent peptide is terminated with the 'tag peptide' encoded by the tmRNA and targeted for degradation. The ribosome is freed to recommence translation, which seems to be the essential function of trans-translation. This Bradyrhizobium sp. (strain ORS 278) protein is SsrA-binding protein.